The following is a 134-amino-acid chain: Interleukin-4 (134 aa).

The signal sequence occupies residues 1 to 23; that stretch reads MGLTYQLLPALVCLLACTSFIQG. 2 cysteine pairs are disulfide-bonded: cysteine 24-cysteine 133 and cysteine 48-cysteine 88. Asparagine 38 carries an N-linked (GlcNAc...) asparagine glycan. N-linked (GlcNAc...) asparagine glycosylation is present at asparagine 101.

It belongs to the IL-4/IL-13 family.

The protein localises to the secreted. Its function is as follows. Participates in at least several B-cell activation processes as well as of other cell types. It is a costimulator of DNA-synthesis. It induces the expression of class II MHC molecules on resting B-cells. It enhances both secretion and cell surface expression of IgE and IgG1. It also regulates the expression of the low affinity Fc receptor for IgE (CD23) on both lymphocytes and monocytes. Positively regulates IL31RA expression in macrophages. Stimulates autophagy in dendritic cells by interfering with mTORC1 signaling and through the induction of RUFY4. The chain is Interleukin-4 (IL4) from Equus caballus (Horse).